The following is a 144-amino-acid chain: DNA polymerase III subunit chi (144 aa).

Belongs to the DNA polymerase III chi/HolC chain family. DNA polymerase III contains a core (composed of alpha, epsilon and theta chains) that associates with a tau subunit. This core dimerizes to form the POLIII' complex. PolIII' associates with the gamma complex (composed of gamma, delta, delta', psi and chi chains) and with the beta chain to form the complete DNA polymerase III complex. Interacts directly with the psi subunit (holD). The only subunit of the DNA polymerase III holoenzyme known to interact with single-stranded DNA binding protein (SSB), interacts directly with DNA helicase YoaA.

The enzyme catalyses DNA(n) + a 2'-deoxyribonucleoside 5'-triphosphate = DNA(n+1) + diphosphate. Part of the beta sliding clamp loading complex, which hydrolyzes ATP to load the beta clamp onto primed DNA to form the DNA replication pre-initiation complex. DNA polymerase III is a complex, multichain enzyme responsible for most of the replicative synthesis in bacteria. This DNA polymerase also exhibits 3' to 5' exonuclease activity. This subunit may stabilize YoaA and/or stimulate the helicase activity of YoaA. This chain is DNA polymerase III subunit chi (holC), found in Haemophilus influenzae (strain ATCC 51907 / DSM 11121 / KW20 / Rd).